Consider the following 766-residue polypeptide: Phosphoribosylformylglycinamidine synthase subunit PurL (766 aa).

The active site involves H49. Y52 and K91 together coordinate ATP. E93 contacts Mg(2+). Substrate contacts are provided by residues 94–97 (SHNH) and R116. H95 serves as the catalytic Proton acceptor. D117 contributes to the Mg(2+) binding site. Substrate is bound at residue Q240. A Mg(2+)-binding site is contributed by D268. Position 312 to 314 (312 to 314 (ESQ)) interacts with substrate. ATP contacts are provided by D508 and G545. Residue N546 participates in Mg(2+) binding. Residue S548 coordinates substrate.

This sequence belongs to the FGAMS family. In terms of assembly, monomer. Part of the FGAM synthase complex composed of 1 PurL, 1 PurQ and 2 PurS subunits.

The protein resides in the cytoplasm. The catalysed reaction is N(2)-formyl-N(1)-(5-phospho-beta-D-ribosyl)glycinamide + L-glutamine + ATP + H2O = 2-formamido-N(1)-(5-O-phospho-beta-D-ribosyl)acetamidine + L-glutamate + ADP + phosphate + H(+). It functions in the pathway purine metabolism; IMP biosynthesis via de novo pathway; 5-amino-1-(5-phospho-D-ribosyl)imidazole from N(2)-formyl-N(1)-(5-phospho-D-ribosyl)glycinamide: step 1/2. Functionally, part of the phosphoribosylformylglycinamidine synthase complex involved in the purines biosynthetic pathway. Catalyzes the ATP-dependent conversion of formylglycinamide ribonucleotide (FGAR) and glutamine to yield formylglycinamidine ribonucleotide (FGAM) and glutamate. The FGAM synthase complex is composed of three subunits. PurQ produces an ammonia molecule by converting glutamine to glutamate. PurL transfers the ammonia molecule to FGAR to form FGAM in an ATP-dependent manner. PurS interacts with PurQ and PurL and is thought to assist in the transfer of the ammonia molecule from PurQ to PurL. In Synechococcus sp. (strain CC9902), this protein is Phosphoribosylformylglycinamidine synthase subunit PurL.